The sequence spans 295 residues: uncharacterized protein (295 aa).

Basic residues predominate over residues arginine 57 to serine 67. A disordered region spans residues arginine 57 to asparagine 94. A compositionally biased stretch (basic and acidic residues) spans arginine 79–leucine 88. 2 coiled-coil regions span residues threonine 87 to tyrosine 116 and aspartate 259 to arginine 286.

Its subcellular location is the nucleus. This is an uncharacterized protein from Schizosaccharomyces pombe (strain 972 / ATCC 24843) (Fission yeast).